Here is a 1030-residue protein sequence, read N- to C-terminus: Tricorn protease (1030 aa).

The six-bladed beta propeller stretch occupies residues 1–270 (MANLLQNPDI…DNVKSLDIGP (270 aa)). The tract at residues 93 to 94 (RR) is binds the substrate's C-terminus. The tract at residues 286–635 (LEDFSMSPGD…EEEKSLNIDA (350 aa)) is seven-bladed beta propeller. The tract at residues 641–712 (NVKEDFAEMY…RTSHSYEMGG (72 aa)) is C-1. Catalysis depends on His706, which acts as the Charge relay system. The segment at 721-816 (RAGRIACDFK…SGFVDVLQDD (96 aa)) is PDZ-like. Residues 817–1022 (RYIRYRAWVE…IEMVLADLEK (206 aa)) are C-2. 877–879 (GGG) provides a ligand contact to substrate. Residue Ser926 is the Nucleophile of the active site. 954–956 (GIS) provides a ligand contact to substrate. Catalysis depends on Glu984, which acts as the Charge relay system.

This sequence belongs to the peptidase S41B family. In terms of assembly, part of the tricorn proteolytic complex.

It localises to the cytoplasm. In terms of biological role, tricorn degrades oligopeptides in a sequential manner. The polypeptide is Tricorn protease (tri) (Thermoplasma volcanium (strain ATCC 51530 / DSM 4299 / JCM 9571 / NBRC 15438 / GSS1)).